Here is a 181-residue protein sequence, read N- to C-terminus: Cytochrome c-type biogenesis protein CcmE (181 aa).

The Cytoplasmic segment spans residues 1–8; sequence MNPRRKSR. The chain crosses the membrane as a helical; Signal-anchor for type II membrane protein span at residues 9–29; sequence LKVVVLIMFSVAVAAGLTLYA. Over 30 to 181 the chain is Periplasmic; the sequence is LSQNIDLFYT…TFNTLQGESK (152 aa). The heme site is built by His131 and Tyr135.

The protein belongs to the CcmE/CycJ family.

Its subcellular location is the cell inner membrane. Heme chaperone required for the biogenesis of c-type cytochromes. Transiently binds heme delivered by CcmC and transfers the heme to apo-cytochromes in a process facilitated by CcmF and CcmH. The polypeptide is Cytochrome c-type biogenesis protein CcmE (Haemophilus ducreyi (strain 35000HP / ATCC 700724)).